A 388-amino-acid polypeptide reads, in one-letter code: (S)-8-oxocitronellyl enol synthase (388 aa).

NADP(+)-binding positions include 38 to 40, 66 to 67, 84 to 85, 108 to 109, and Q142; these read TGI, RR, DV, and SW. Catalysis depends on residues K146 and Y178. Residues K146 and Y178 each contribute to the substrate site. Residues Y178, V204, and 211-213 each bind NADP(+); that span reads SMM. S349 provides a ligand contact to substrate.

It belongs to the short-chain dehydrogenases/reductases (SDR) family. Highly divergent. In terms of assembly, homodimer. As to expression, expressed in internal phloem-associated parenchyma (IPAP) cells.

The protein resides in the cytoplasm. It localises to the cytosol. The catalysed reaction is (S)-8-oxocitronellyl enol + NADP(+) = (6E)-8-oxogeranial + NADPH + H(+). It catalyses the reaction (S)-8-oxocitronellyl enol + NAD(+) = (6E)-8-oxogeranial + NADH + H(+). Functionally, iridoid synthase that catalyzes the first step in generation of the iridoid ring scaffold using the linear monoterpene (6E)-8-oxogeranial as substrate. Iridoids comprise a large family of distinctive bicyclic monoterpenes that possess a wide range of pharmacological activities, including anticancer, anti-inflammatory, antifungal and antibacterial activities. In Catharanthus roseus (Madagascar periwinkle), this protein is (S)-8-oxocitronellyl enol synthase.